Consider the following 366-residue polypeptide: Beta sliding clamp (366 aa).

The protein belongs to the beta sliding clamp family. Forms a ring-shaped head-to-tail homodimer around DNA which binds and tethers DNA polymerases and other proteins to the DNA. The DNA replisome complex has a single clamp-loading complex (3 tau and 1 each of delta, delta', psi and chi subunits) which binds 3 Pol III cores (1 core on the leading strand and 2 on the lagging strand) each with a beta sliding clamp dimer. Additional proteins in the replisome are other copies of gamma, psi and chi, Ssb, DNA helicase and RNA primase.

The protein resides in the cytoplasm. In terms of biological role, confers DNA tethering and processivity to DNA polymerases and other proteins. Acts as a clamp, forming a ring around DNA (a reaction catalyzed by the clamp-loading complex) which diffuses in an ATP-independent manner freely and bidirectionally along dsDNA. Initially characterized for its ability to contact the catalytic subunit of DNA polymerase III (Pol III), a complex, multichain enzyme responsible for most of the replicative synthesis in bacteria; Pol III exhibits 3'-5' exonuclease proofreading activity. The beta chain is required for initiation of replication as well as for processivity of DNA replication. This Buchnera aphidicola subsp. Acyrthosiphon pisum (strain APS) (Acyrthosiphon pisum symbiotic bacterium) protein is Beta sliding clamp (dnaN).